An 817-amino-acid chain; its full sequence is Trehalose-phosphatase (817 aa).

Residues 1-547 (MSVYGKIPST…LAATKTDQRI (547 aa)) form a glycosyltransferase region.

The protein in the N-terminal section; belongs to the glycosyltransferase 20 family. In the C-terminal section; belongs to the trehalose phosphatase family. Component of the trehalose synthase complex that contains at least tps1, ntp1, and tpp1. Interacts with tps1. Interacts with ntp1. Requires Mg(2+) as cofactor.

It catalyses the reaction alpha,alpha-trehalose 6-phosphate + H2O = alpha,alpha-trehalose + phosphate. It participates in carbohydrate biosynthesis. In terms of biological role, phosphatase catalytic subunit of the trehalose synthase complex that catalyzes the production of trehalose from glucose-6-phosphate and UDP-alpha-D-glucose in a two step process. The disaccharide trehalose serves as a storage carbohydrate that is mobilized during nutrient stress and spore germination. Together with ntp1, regulates the level of trehalose as a protectant for cell integrity during thermal, osmotic, and oxidative stress. In Schizosaccharomyces pombe (strain 972 / ATCC 24843) (Fission yeast), this protein is Trehalose-phosphatase.